The chain runs to 206 residues: Small ribosomal subunit protein uS4 (206 aa).

The 61-residue stretch at 96–156 folds into the S4 RNA-binding domain; sequence TRLDNVVYRM…EKSQKQARIK (61 aa).

Belongs to the universal ribosomal protein uS4 family. Part of the 30S ribosomal subunit. Contacts protein S5. The interaction surface between S4 and S5 is involved in control of translational fidelity.

One of the primary rRNA binding proteins, it binds directly to 16S rRNA where it nucleates assembly of the body of the 30S subunit. In terms of biological role, with S5 and S12 plays an important role in translational accuracy. This chain is Small ribosomal subunit protein uS4, found in Shewanella loihica (strain ATCC BAA-1088 / PV-4).